Consider the following 508-residue polypeptide: Light-independent protochlorophyllide reductase subunit B (508 aa).

Aspartate 36 contributes to the [4Fe-4S] cluster binding site. Catalysis depends on aspartate 294, which acts as the Proton donor. Residue 429 to 430 (GM) participates in substrate binding.

Belongs to the ChlB/BchB/BchZ family. Protochlorophyllide reductase is composed of three subunits; ChlL, ChlN and ChlB. Forms a heterotetramer of two ChlB and two ChlN subunits. It depends on [4Fe-4S] cluster as a cofactor.

It carries out the reaction chlorophyllide a + oxidized 2[4Fe-4S]-[ferredoxin] + 2 ADP + 2 phosphate = protochlorophyllide a + reduced 2[4Fe-4S]-[ferredoxin] + 2 ATP + 2 H2O. It participates in porphyrin-containing compound metabolism; chlorophyll biosynthesis (light-independent). Functionally, component of the dark-operative protochlorophyllide reductase (DPOR) that uses Mg-ATP and reduced ferredoxin to reduce ring D of protochlorophyllide (Pchlide) to form chlorophyllide a (Chlide). This reaction is light-independent. The NB-protein (ChlN-ChlB) is the catalytic component of the complex. This Thermosynechococcus vestitus (strain NIES-2133 / IAM M-273 / BP-1) protein is Light-independent protochlorophyllide reductase subunit B.